A 476-amino-acid polypeptide reads, in one-letter code: Serine carboxypeptidase 2 (476 aa).

The first 34 residues, methionine 1–alanine 34, serve as a signal peptide directing secretion. 3 disulfides stabilise this stretch: cysteine 97–cysteine 353, cysteine 254–cysteine 266, and cysteine 290–cysteine 320. Residues asparagine 148 and asparagine 159 are each glycosylated (N-linked (GlcNAc...) asparagine). Serine 190 is a catalytic residue. Residue asparagine 291 is glycosylated (N-linked (GlcNAc...) asparagine). A propeptide spans serine 295 to leucine 313 (linker peptide). The residue at position 314 (threonine 314) is a Blocked amino end (Thr). Residues asparagine 341 and asparagine 347 are each glycosylated (N-linked (GlcNAc...) asparagine). N-linked (GlcNAc...) asparagine; partial glycosylation occurs at asparagine 352. The O-linked (GalNAc...) threonine; in variant 351-AT-352 glycan is linked to asparagine 352. Active-site residues include aspartate 390 and histidine 443. Residue asparagine 472 is glycosylated (N-linked (GlcNAc...) asparagine).

It belongs to the peptidase S10 family. As to quaternary structure, carboxypeptidase II is a dimer, where each monomer is composed of two chains linked by a disulfide bond.

Its subcellular location is the secreted. The enzyme catalyses Preferential release of a C-terminal arginine or lysine residue.. In terms of biological role, may be involved in the degradation of small peptides (2-5 residues) or in the degradation of storage proteins in the embryo. The protein is Serine carboxypeptidase 2 (CBP2) of Hordeum vulgare (Barley).